A 278-amino-acid chain; its full sequence is Small ribosomal subunit biogenesis GTPase RsgA (278 aa).

The CP-type G domain maps to 62–218; sequence KNELTRPRVA…ICDTPGFNVI (157 aa). Residues 112 to 115 and 162 to 170 each bind GTP; these read TKTD and GQSGVGKSS. Zn(2+)-binding residues include Cys241, Cys246, His248, and Cys254.

Belongs to the TRAFAC class YlqF/YawG GTPase family. RsgA subfamily. In terms of assembly, monomer. Associates with 30S ribosomal subunit, binds 16S rRNA. Requires Zn(2+) as cofactor.

The protein resides in the cytoplasm. In terms of biological role, one of several proteins that assist in the late maturation steps of the functional core of the 30S ribosomal subunit. Helps release RbfA from mature subunits. May play a role in the assembly of ribosomal proteins into the subunit. Circularly permuted GTPase that catalyzes slow GTP hydrolysis, GTPase activity is stimulated by the 30S ribosomal subunit. This Mycoplasma genitalium (strain ATCC 33530 / DSM 19775 / NCTC 10195 / G37) (Mycoplasmoides genitalium) protein is Small ribosomal subunit biogenesis GTPase RsgA.